We begin with the raw amino-acid sequence, 447 residues long: MDINKINETIQMISEEHFDIRTVTMGISLLDCIGGDGQRTAEKVHRKIVDKAGKLVETAQQLERDFGVPIVNKRISVTPVSLLAGNADYDGLIKIARALDQAAADVGVDFLGGYSALIQKGSTPTEKMLIDSFPEVLSTTKLLMSSINIASTKAGINLNAVGKTGRTIKRISEVDPLGNAKLVVFANAVEDNPFMAGAFHGVSEDDAVINVGVSGPGVVKRALETVRDRSIDVVAEKIKTTAFKITRIGQLIGGLTAKKLGLPFGIVDLSLAPTPARGDSVAEVLEEIGLEQVGTHGTTAALMLLNDAIKKGGVMASQRVGGLSGAFIPVSEDAGMIDATVAGTLSISKLEAMTSVCSVGLDMIAIPGNTPASTISAMIADEAAIGVQNNKTTAVRVIPVPGKSVGDSIDFGGLLGRAPIMPVIEKSSTAFINRGGHIPAPIHSFKN.

Belongs to the UPF0210 family. As to quaternary structure, homodimer.

The protein is UPF0210 protein OEOE_0945 of Oenococcus oeni (strain ATCC BAA-331 / PSU-1).